A 209-amino-acid chain; its full sequence is MAEVASQETEFAAFAFGSVVERRDELEGRPWISYPVRVVADTPELVAVYLSHGTLLTFGDGPFSWGPHPWGPFGDRWQSAGILQLHRPGRGHSVWVLRDADTGAFREWYVNVEAPWRRTPTGFSTLDHEIDLVVPADSRTLRWKDVEKFEERARIGHFSPEEATAIRTEAADVAREIAAGEQWWDTSWSRWEPPAGWHALLQSFETEGS.

Asparagine 111, aspartate 127, glutamate 129, and aspartate 131 together coordinate a divalent metal cation. Lysine 144 (proton donor) is an active-site residue. Aspartate 145 is an a divalent metal cation binding site.

Belongs to the FomD family. In terms of assembly, monomer in solution. It depends on Mn(2+) as a cofactor. The cofactor is Co(2+).

The enzyme catalyses cytidine 5'-({hydroxy[(S)-2-hydroxypropyl]phosphonoyl}phosphate) + H2O = (S)-2-hydroxypropylphosphonate + CMP + H(+). It functions in the pathway antibiotic biosynthesis; fosfomycin biosynthesis. With respect to regulation, hydrolysis of (S)-HPP-CMP is inhibited by CDP. Involved in fosfomycin biosynthesis. Catalyzes the hydrolysis of cytidylyl (S)-2-hydroxypropylphosphonate ((S)-HPP-CMP) to give (S)-2-hydroxypropylphosphonate ((S)-HPP) and CMP. Can also hydrolyze (R)-HPP-CMP and cytidylyl 2-hydroxyethylphosphonate (HEP-CMP), which is a biosynthetic intermediate before C-methylation, but the catalytic efficiency is much higher with (S)-HPP-CMP. The sequence is that of Cytidylyl-2-hydroxypropylphosphonate hydrolase from Streptomyces wedmorensis.